The sequence spans 1252 residues: DNA-directed RNA polymerase subunit beta (1252 aa).

It belongs to the RNA polymerase beta chain family. As to quaternary structure, the RNAP catalytic core consists of 2 alpha, 1 beta, 1 beta' and 1 omega subunit. When a sigma factor is associated with the core the holoenzyme is formed, which can initiate transcription.

The catalysed reaction is RNA(n) + a ribonucleoside 5'-triphosphate = RNA(n+1) + diphosphate. Its function is as follows. DNA-dependent RNA polymerase catalyzes the transcription of DNA into RNA using the four ribonucleoside triphosphates as substrates. In Chlamydia trachomatis serovar L2 (strain ATCC VR-902B / DSM 19102 / 434/Bu), this protein is DNA-directed RNA polymerase subunit beta.